Consider the following 292-residue polypeptide: MAAITASMVAELRAKTDAPMMECKKALTEAEGNMEKAEEILRVKLGNKAGKAAARITAEGVIASFIDGTIGALVELNCETDFVSRNDDFLGFANEIAKLIATQNPADVAALSALSIGDETVEAVRTRLIGKIGENMTIRRFQRFEGTKLASYLHGTRIGVMVAFDGDEVAAKDVAMHAAAMKPVALSSDEVPAELIAKERSIAEQKAAESGKPAEIVAKMVEGSVQKYLKEVSLLNQPFVKNDKQTVEQMLKAANTTVKGFTLFVVGEGIEKKQDDFAAEVAAQVAAAKQQA.

The interval 80-83 (TDFV) is involved in Mg(2+) ion dislocation from EF-Tu.

Belongs to the EF-Ts family.

The protein resides in the cytoplasm. Its function is as follows. Associates with the EF-Tu.GDP complex and induces the exchange of GDP to GTP. It remains bound to the aminoacyl-tRNA.EF-Tu.GTP complex up to the GTP hydrolysis stage on the ribosome. The polypeptide is Elongation factor Ts (Ralstonia nicotianae (strain ATCC BAA-1114 / GMI1000) (Ralstonia solanacearum)).